A 336-amino-acid polypeptide reads, in one-letter code: tRNA N6-adenosine threonylcarbamoyltransferase (336 aa).

Fe cation contacts are provided by His110 and His114. Residues 133-137 (LVSGK), Asp166, Gly179, and Asn271 contribute to the substrate site. Fe cation is bound at residue Asp300.

The protein belongs to the KAE1 / TsaD family. Fe(2+) is required as a cofactor.

The protein resides in the cytoplasm. It carries out the reaction L-threonylcarbamoyladenylate + adenosine(37) in tRNA = N(6)-L-threonylcarbamoyladenosine(37) in tRNA + AMP + H(+). Required for the formation of a threonylcarbamoyl group on adenosine at position 37 (t(6)A37) in tRNAs that read codons beginning with adenine. Is involved in the transfer of the threonylcarbamoyl moiety of threonylcarbamoyl-AMP (TC-AMP) to the N6 group of A37, together with TsaE and TsaB. TsaD likely plays a direct catalytic role in this reaction. This is tRNA N6-adenosine threonylcarbamoyltransferase from Buchnera aphidicola subsp. Acyrthosiphon pisum (strain 5A).